Reading from the N-terminus, the 290-residue chain is 4-diphosphocytidyl-2-C-methyl-D-erythritol kinase (290 aa).

Residue lysine 13 is part of the active site. 96–106 contributes to the ATP binding site; sequence PMGGGIGGGSS. The active site involves aspartate 138.

This sequence belongs to the GHMP kinase family. IspE subfamily.

It catalyses the reaction 4-CDP-2-C-methyl-D-erythritol + ATP = 4-CDP-2-C-methyl-D-erythritol 2-phosphate + ADP + H(+). It functions in the pathway isoprenoid biosynthesis; isopentenyl diphosphate biosynthesis via DXP pathway; isopentenyl diphosphate from 1-deoxy-D-xylulose 5-phosphate: step 3/6. In terms of biological role, catalyzes the phosphorylation of the position 2 hydroxy group of 4-diphosphocytidyl-2C-methyl-D-erythritol. The polypeptide is 4-diphosphocytidyl-2-C-methyl-D-erythritol kinase (Vibrio campbellii (strain ATCC BAA-1116)).